The sequence spans 155 residues: MKTYSAKPSEIEKKWWVIDAKNIVLGRLASRVANMLRGKHKPSFTPHLDCGDNIIIINAEHVKLTGKKANPKDGKIYYRHTGFPGGLKDTTAGKILSSKHPERVIKMAVKRMITRNTLGAKQMSNLYVYANGDHPHMAQQPTVYDFASQNPKNKK.

Belongs to the universal ribosomal protein uL13 family. As to quaternary structure, part of the 50S ribosomal subunit.

Its function is as follows. This protein is one of the early assembly proteins of the 50S ribosomal subunit, although it is not seen to bind rRNA by itself. It is important during the early stages of 50S assembly. This Rickettsia felis (strain ATCC VR-1525 / URRWXCal2) (Rickettsia azadi) protein is Large ribosomal subunit protein uL13.